A 1228-amino-acid polypeptide reads, in one-letter code: DNA-directed RNA polymerase subunit beta (1228 aa).

The protein belongs to the RNA polymerase beta chain family. In terms of assembly, the RNAP catalytic core consists of 2 alpha, 1 beta, 1 beta' and 1 omega subunit. When a sigma factor is associated with the core the holoenzyme is formed, which can initiate transcription.

The catalysed reaction is RNA(n) + a ribonucleoside 5'-triphosphate = RNA(n+1) + diphosphate. Its function is as follows. DNA-dependent RNA polymerase catalyzes the transcription of DNA into RNA using the four ribonucleoside triphosphates as substrates. This chain is DNA-directed RNA polymerase subunit beta, found in Leptospira biflexa.